Here is an 800-residue protein sequence, read N- to C-terminus: Leukocyte receptor cluster member 8 homolog (800 aa).

Disordered regions lie at residues 118–149 (NYQSMSSQSGQHQGNLAQPPVPGLEDSSMSYS), 175–229 (PCIQ…GFKF), 245–273 (SSEHHDNSAGQQQQQATHMHHPLQQPQQQ), 335–394 (TIDW…GRGS), and 407–519 (KESS…HGHG). 2 stretches are compositionally biased toward low complexity: residues 120 to 131 (QSMSSQSGQHQG) and 184 to 201 (NQSNPHSSSNQPNYSQQS). The span at 252 to 261 (SAGQQQQQAT) shows a compositional bias: polar residues. The span at 338–352 (WSREPLPGKDGGKES) shows a compositional bias: basic and acidic residues. Polar residues predominate over residues 360 to 387 (QTTLQTSHGSTITITQSPRGGGNSTNAA). Residues 409-418 (SSSSSSAGSR) show a composition bias toward low complexity. Basic residues-rich tracts occupy residues 419-433 (SRSRSPSHSPHRRYR) and 508-519 (EKRAARFQHGHG). One can recognise a PCI domain in the interval 636 to 800 (DHEEFNQCQA…KLSLAVLPNI (165 aa)).

The sequence is that of Leukocyte receptor cluster member 8 homolog (leng8) from Xenopus laevis (African clawed frog).